Consider the following 144-residue polypeptide: 3-dehydroquinate dehydratase (144 aa).

Residue Tyr-24 is the Proton acceptor of the active site. The substrate site is built by Asn-73, His-79, and Asp-86. His-99 functions as the Proton donor in the catalytic mechanism. Substrate contacts are provided by residues 100–101 (LS) and Arg-110.

This sequence belongs to the type-II 3-dehydroquinase family. Homododecamer.

It carries out the reaction 3-dehydroquinate = 3-dehydroshikimate + H2O. The protein operates within metabolic intermediate biosynthesis; chorismate biosynthesis; chorismate from D-erythrose 4-phosphate and phosphoenolpyruvate: step 3/7. Its function is as follows. Catalyzes a trans-dehydration via an enolate intermediate. This Shewanella sp. (strain ANA-3) protein is 3-dehydroquinate dehydratase.